Reading from the N-terminus, the 52-residue chain is DLLEALSQDQKLLMAKFLPHIYAELANREGNWHEDAALRPLHDHDYPGWMDF.

This sequence belongs to the gastrin/cholecystokinin family.

The protein localises to the secreted. In terms of biological role, may control digestion processes. This chain is Gastrin/cholecystokinin-like peptide, found in Trachemys scripta (Red-eared slider turtle).